Consider the following 121-residue polypeptide: MASCLALRMALLLVSGVLAPAVLTDDVPQEPVPTLWNEPAELPSGEGPVESTSPGREPVDTGPPAPTVAPGPEDSTAQERLDQGGGSLGPGAIAAIVIAALLATCVVLALVVVALRKFSAS.

Residues 1 to 24 (MASCLALRMALLLVSGVLAPAVLT) form the signal peptide. Residues 25–92 (DDVPQEPVPT…QGGGSLGPGA (68 aa)) lie on the Extracellular side of the membrane. A disordered region spans residues 28–84 (PQEPVPTLWNEPAELPSGEGPVESTSPGREPVDTGPPAPTVAPGPEDSTAQERLDQG). Residues 93 to 113 (IAAIVIAALLATCVVLALVVV) traverse the membrane as a helical segment. Topologically, residues 114-121 (ALRKFSAS) are cytoplasmic.

In terms of assembly, interacts (via the extracellular domain) with FGF2. In terms of tissue distribution, expressed in cartilage.

It localises to the membrane. The protein localises to the cytoplasm. Its subcellular location is the secreted. It is found in the extracellular space. The protein resides in the extracellular matrix. Plays a role in the regulation of chondrocyte maturation and postnatal endochondral ossification. May inhibit cell growth stimulation induced by FGF2. This Homo sapiens (Human) protein is Protein SNORC.